Here is a 140-residue protein sequence, read N- to C-terminus: Ribonuclease P protein subunit p20 (140 aa).

This sequence belongs to the histone-like Alba family. Component of nuclear RNase P and RNase MRP complexes. RNase P consists of a catalytic RNA moiety and 10 different protein chains; POP1, POP4, POP5, POP7, RPP14, RPP21, RPP25, RPP30, RPP38 and RPP40. Within the RNase P complex, POP1, POP7 and RPP25 form the 'finger' subcomplex, POP5, RPP14, RPP40 and homodimeric RPP30 form the 'palm' subcomplex, and RPP21, POP4 and RPP38 form the 'wrist' subcomplex. All subunits of the RNase P complex interact with the catalytic RNA. Several subunits of RNase P are also part of the RNase MRP complex. RNase MRP consists of a catalytic RNA moiety and about 8 protein subunits; POP1, POP7, RPP25, RPP30, RPP38, RPP40 and possibly also POP4 and POP5. Interacts with SMN1. POP7 forms a heterodimer with RPP25 that binds to the P3 stem loop of the catalytic RNA.

Its subcellular location is the nucleus. It is found in the nucleolus. The protein localises to the cytoplasm. It localises to the cytoplasmic granule. Component of ribonuclease P, a ribonucleoprotein complex that generates mature tRNA molecules by cleaving their 5'-ends. Also a component of the MRP ribonuclease complex, which cleaves pre-rRNA sequences. This Mus musculus (Mouse) protein is Ribonuclease P protein subunit p20 (Pop7).